The chain runs to 493 residues: E3 ubiquitin-protein ligase Hakai (493 aa).

2 disordered regions span residues 1–20 (MDHN…LGGL) and 28–61 (IKLI…GDEE). The segment covering 7-16 (DLQGTNSSAS) has biased composition (polar residues). Residues 109–149 (CDKCGLPIKMYGRMIPCKHVFCYDCAILHEKKGDKMCPGCN) form an RING-type zinc finger. The HYB domain stretch occupies residues 148–206 (CNEPVQRIEQCVRGSLFMCSIVQGCKRTYLSQRDLQAHINHRHMRAGKPVTRPPLEPVH). The segment at 164-190 (FMCSIVQGCKRTYLSQRDLQAHINHRH) adopts a C2H2-type zinc-finger fold. The interval 253–493 (YNQPHEDIRP…DQARYRPYYQ (241 aa)) is disordered. Pro residues-rich tracts occupy residues 262–276 (PPPA…PPRP), 342–352 (APPPPPPPPIS), 372–389 (APPP…PPPG), and 399–412 (MNHP…PQHG). The span at 427–444 (NPNSLPQFSEDQGTLSPP) shows a compositional bias: polar residues. Residues 459–469 (PRGPPPPPRMQ) show a composition bias toward pro residues. A compositionally biased stretch (low complexity) spans 470–480 (GPPAQAPLAGP).

Belongs to the Hakai family. In terms of assembly, homodimer. Interacts with tyrosine-phosphorylated SRC substrates. Component of the WMM complex, a N6-methyltransferase complex composed of a catalytic subcomplex, named MAC, and of an associated subcomplex, named MACOM. Component of the MACOM subcomplex.

It is found in the nucleus speckle. The protein localises to the nucleus. Its subcellular location is the nucleoplasm. It carries out the reaction S-ubiquitinyl-[E2 ubiquitin-conjugating enzyme]-L-cysteine + [acceptor protein]-L-lysine = [E2 ubiquitin-conjugating enzyme]-L-cysteine + N(6)-ubiquitinyl-[acceptor protein]-L-lysine.. It functions in the pathway protein modification; protein ubiquitination. In terms of biological role, E3 ubiquitin-protein ligase that mediates ubiquitination of several tyrosine-phosphorylated Src substrates. Associated component of the WMM complex, a complex that mediates N6-methyladenosine (m6A) methylation of RNAs, a modification that plays a role in the efficiency of mRNA splicing and RNA processing. In Gallus gallus (Chicken), this protein is E3 ubiquitin-protein ligase Hakai.